A 959-amino-acid chain; its full sequence is UPF0182 protein MAE_41360 (959 aa).

9 helical membrane-spanning segments follow: residues 13 to 33, 50 to 70, 99 to 119, 156 to 176, 184 to 204, 239 to 259, 276 to 296, 319 to 339, and 362 to 382; these read PILL…VVAN, LSWQ…FIFT, LLGL…MLLY, DISS…GLLI, IISI…WANF, LWLT…YLFS, LRHL…HHII, VGQF…IWLG, and FFPY…GTII.

This sequence belongs to the UPF0182 family.

Its subcellular location is the cell membrane. The chain is UPF0182 protein MAE_41360 from Microcystis aeruginosa (strain NIES-843 / IAM M-2473).